The primary structure comprises 285 residues: Formamidopyrimidine-DNA glycosylase (285 aa).

Pro2 functions as the Schiff-base intermediate with DNA in the catalytic mechanism. Glu3 acts as the Proton donor in catalysis. Lys61 acts as the Proton donor; for beta-elimination activity in catalysis. Residues His102, Arg121, and Lys163 each coordinate DNA. Residues 249–283 (NAYGQAGKPCARCGTPIARETFMNRGSHFCNRCQK) form an FPG-type zinc finger. The active-site Proton donor; for delta-elimination activity is Arg273.

The protein belongs to the FPG family. As to quaternary structure, monomer. Zn(2+) is required as a cofactor.

It carries out the reaction Hydrolysis of DNA containing ring-opened 7-methylguanine residues, releasing 2,6-diamino-4-hydroxy-5-(N-methyl)formamidopyrimidine.. The catalysed reaction is 2'-deoxyribonucleotide-(2'-deoxyribose 5'-phosphate)-2'-deoxyribonucleotide-DNA = a 3'-end 2'-deoxyribonucleotide-(2,3-dehydro-2,3-deoxyribose 5'-phosphate)-DNA + a 5'-end 5'-phospho-2'-deoxyribonucleoside-DNA + H(+). Involved in base excision repair of DNA damaged by oxidation or by mutagenic agents. Acts as a DNA glycosylase that recognizes and removes damaged bases. Has a preference for oxidized purines, such as 7,8-dihydro-8-oxoguanine (8-oxoG). Has AP (apurinic/apyrimidinic) lyase activity and introduces nicks in the DNA strand. Cleaves the DNA backbone by beta-delta elimination to generate a single-strand break at the site of the removed base with both 3'- and 5'-phosphates. In Corynebacterium efficiens (strain DSM 44549 / YS-314 / AJ 12310 / JCM 11189 / NBRC 100395), this protein is Formamidopyrimidine-DNA glycosylase.